The following is a 60-amino-acid chain: UPF0434 protein CKO_02153 (60 aa).

This sequence belongs to the UPF0434 family.

The chain is UPF0434 protein CKO_02153 from Citrobacter koseri (strain ATCC BAA-895 / CDC 4225-83 / SGSC4696).